Consider the following 302-residue polypeptide: Oxygen-dependent coproporphyrinogen-III oxidase (302 aa).

Serine 94 contacts substrate. The a divalent metal cation site is built by histidine 98 and histidine 108. Histidine 108 serves as the catalytic Proton donor. Substrate is bound at residue 110–112; sequence NVR. Residues histidine 147 and histidine 177 each coordinate a divalent metal cation. Positions 242–277 are important for dimerization; sequence YVEFNLVYDRGTLFGLQTGGRTESILMSMPPLARWE. A substrate-binding site is contributed by 260 to 262; sequence GGR.

Belongs to the aerobic coproporphyrinogen-III oxidase family. As to quaternary structure, homodimer. A divalent metal cation is required as a cofactor.

The protein localises to the cytoplasm. It carries out the reaction coproporphyrinogen III + O2 + 2 H(+) = protoporphyrinogen IX + 2 CO2 + 2 H2O. It participates in porphyrin-containing compound metabolism; protoporphyrin-IX biosynthesis; protoporphyrinogen-IX from coproporphyrinogen-III (O2 route): step 1/1. Functionally, involved in the heme biosynthesis. Catalyzes the aerobic oxidative decarboxylation of propionate groups of rings A and B of coproporphyrinogen-III to yield the vinyl groups in protoporphyrinogen-IX. The sequence is that of Oxygen-dependent coproporphyrinogen-III oxidase from Aeromonas hydrophila subsp. hydrophila (strain ATCC 7966 / DSM 30187 / BCRC 13018 / CCUG 14551 / JCM 1027 / KCTC 2358 / NCIMB 9240 / NCTC 8049).